The following is a 180-amino-acid chain: MENRLKAQYEKEIVPALVDKFNYTSVMQVPKLAKIVLNMGVGDAVTNAKNLDEAVEELTLISGQKPLVTRAKKSIAGFRLREGMAIGAKVDLRGERMYDFLDKLINVSLPRVRDFHGVSTRSFDGRGNYTLGVREQLIFPEINYDNVNRVRGLDIVIVTTADSDEESRELLTQFGMPFAK.

Belongs to the universal ribosomal protein uL5 family. As to quaternary structure, part of the 50S ribosomal subunit; part of the 5S rRNA/L5/L18/L25 subcomplex. Contacts the 5S rRNA and the P site tRNA. Forms a bridge to the 30S subunit in the 70S ribosome.

In terms of biological role, this is one of the proteins that bind and probably mediate the attachment of the 5S RNA into the large ribosomal subunit, where it forms part of the central protuberance. In the 70S ribosome it contacts protein S13 of the 30S subunit (bridge B1b), connecting the 2 subunits; this bridge is implicated in subunit movement. Contacts the P site tRNA; the 5S rRNA and some of its associated proteins might help stabilize positioning of ribosome-bound tRNAs. The sequence is that of Large ribosomal subunit protein uL5 from Lactiplantibacillus plantarum (strain ATCC BAA-793 / NCIMB 8826 / WCFS1) (Lactobacillus plantarum).